A 508-amino-acid chain; its full sequence is MAP kinase kinase MKK1/SSP32 (508 aa).

Disordered stretches follow at residues 1 to 21, 35 to 95, and 130 to 158; these read MASLFRPPESAKCNPNSPRLK, IYLT…LSIN, and ELSGNSDLTPSSMASPFSHTNTSSPYLRN. Residues 35 to 47 are compositionally biased toward polar residues; sequence IYLTSNGSSTTAY. Low complexity predominate over residues 48 to 66; the sequence is SSHTPEPLTSSTSTLFSQT. Polar residues-rich tracts occupy residues 67–79 and 131–158; these read RLHPSDSSMTLNT and LSGNSDLTPSSMASPFSHTNTSSPYLRN. Ser-192 carries the post-translational modification Phosphoserine. The region spanning 221–488 is the Protein kinase domain; the sequence is IETLGILGEG…PRQMINHPWI (268 aa). ATP is bound by residues 227-235 and Lys-250; that span reads LGEGAGGSV. Asp-349 serves as the catalytic Proton acceptor.

Belongs to the protein kinase superfamily. STE Ser/Thr protein kinase family. MAP kinase kinase subfamily.

It carries out the reaction L-seryl-[protein] + ATP = O-phospho-L-seryl-[protein] + ADP + H(+). The catalysed reaction is L-threonyl-[protein] + ATP = O-phospho-L-threonyl-[protein] + ADP + H(+). It catalyses the reaction L-tyrosyl-[protein] + ATP = O-phospho-L-tyrosyl-[protein] + ADP + H(+). Its function is as follows. Involved in a signal transduction pathway that play a role in yeast cell morphogenesis and cell growth. This pathway seems to start by SMP3; then involve the kinase PKC1 that may act on the BCK1 kinase that then phosphorylates MKK1 and MKK2 which themselves phosphorylate the MPK1 kinase. In Saccharomyces cerevisiae (strain ATCC 204508 / S288c) (Baker's yeast), this protein is MAP kinase kinase MKK1/SSP32 (MKK1).